A 405-amino-acid chain; its full sequence is CMP-sialic acid transporter 3 (405 aa).

Topologically, residues 1-39 (MKNGIAECPACHSKLVSPGSKTISRAYDDHKIRVSSKQR) are cytoplasmic. A helical transmembrane segment spans residues 40–60 (VLNVLLVVGDCMLVGLQPVLV). Over 61–73 (YMSKVDGKFNFSP) the chain is Lumenal. A helical transmembrane segment spans residues 74–94 (ISVNFLTEIAKVIFAIVMLLI). Residues 95–142 (QARHQKVGEKPLLSVSTFVQAARNNVLLAVPALLYAINNYLKFTMQLY) lie on the Cytoplasmic side of the membrane. The chain crosses the membrane as a helical span at residues 143 to 163 (FNPATVKMLSNLKVLVIAVLL). The Lumenal portion of the chain corresponds to 164-170 (KMVMKRR). A helical membrane pass occupies residues 171–191 (FSIIQWEALALLLIGISVNQL). The Cytoplasmic segment spans residues 192-199 (RSLPEGAT). A helical transmembrane segment spans residues 200 to 220 (AIGIPLATGAYVCTVIFVTVP). The Lumenal segment spans residues 221-243 (SMASVFNEYALKSQYDTSIYLQN). A helical membrane pass occupies residues 244-264 (LFLYGYGAIFNFLGILGTVIY). The Cytoplasmic portion of the chain corresponds to 265-280 (KGPGSFDILQGHSRAT). Residues 281–301 (MFLILNNAAQGILSSFFFKYA) form a helical membrane-spanning segment. The Lumenal portion of the chain corresponds to 302–321 (DTILKKYSSTVATIFTGIAS). Residues 322–342 (AALFGHVITMNFLLGISIVFI) traverse the membrane as a helical segment. The Cytoplasmic portion of the chain corresponds to 343-405 (SMHQFFSPLA…SDDRTPLLPR (63 aa)). Positions 385-405 (GANEEASHRGESDDRTPLLPR) are disordered. Basic and acidic residues predominate over residues 389 to 405 (EASHRGESDDRTPLLPR).

It belongs to the nucleotide-sugar transporter family. CMP-Sialate:CMP antiporter (TC 2.A.7.12) subfamily.

The protein resides in the golgi apparatus membrane. Its function is as follows. Sugar transporter involved in the transport of CMP-sialic acid from the cytoplasm into the Golgi. This chain is CMP-sialic acid transporter 3 (UTR6), found in Arabidopsis thaliana (Mouse-ear cress).